Here is a 77-residue protein sequence, read N- to C-terminus: Liver-expressed antimicrobial peptide 2 (77 aa).

The N-terminal stretch at 1–22 (MWHLKLCAVLMIFLLLLGQIDG) is a signal peptide. A propeptide spanning residues 23-37 (SPIPEVSSAKRRPRR) is cleaved from the precursor. 2 cysteine pairs are disulfide-bonded: Cys-54–Cys-65 and Cys-60–Cys-70.

It belongs to the LEAP2 family.

It localises to the secreted. Has an antimicrobial activity. The sequence is that of Liver-expressed antimicrobial peptide 2 (LEAP2) from Homo sapiens (Human).